A 579-amino-acid chain; its full sequence is Methionine--tRNA ligase (579 aa).

A 'HIGH' region motif is present at residues 14–24 (PYINGVKHLGN). Positions 146, 149, 159, and 162 each coordinate Zn(2+). Residues 346–350 (KFSTS) carry the 'KMSKS' region motif. T349 serves as a coordination point for ATP.

It belongs to the class-I aminoacyl-tRNA synthetase family. MetG type 1 subfamily. In terms of assembly, monomer. It depends on Zn(2+) as a cofactor.

It is found in the cytoplasm. The enzyme catalyses tRNA(Met) + L-methionine + ATP = L-methionyl-tRNA(Met) + AMP + diphosphate. Is required not only for elongation of protein synthesis but also for the initiation of all mRNA translation through initiator tRNA(fMet) aminoacylation. The chain is Methionine--tRNA ligase from Hyphomonas neptunium (strain ATCC 15444).